A 350-amino-acid polypeptide reads, in one-letter code: Bifunctional nitrilase/nitrile hydratase NIT4B (350 aa).

The CN hydrolase domain occupies 30 to 302; the sequence is VRATVVQAST…EALISADLDL (273 aa). The active-site Proton acceptor is glutamate 70. Lysine 157 is a catalytic residue. Cysteine 191 functions as the Nucleophile in the catalytic mechanism.

The protein belongs to the carbon-nitrogen hydrolase superfamily. Nitrilase family. As to expression, highly expressed in leaves and cotyledons, lower expression in stems and roots.

The catalysed reaction is L-asparagine = 3-cyano-L-alanine + H2O. It catalyses the reaction 3-cyano-L-alanine + 2 H2O = L-aspartate + NH4(+). Involved in the cyanide detoxification pathway. Has nitrilase and nitrile-hydratase activity in the ratio 3.3:1, producing both asparagine and aspartic acid from beta-cyano-L-alanine (Ala(CN)). Can also use 3-phenylpropionitrile as substrate, but not indole-3-acetonitrile. The polypeptide is Bifunctional nitrilase/nitrile hydratase NIT4B (NIT4B) (Lupinus angustifolius (Narrow-leaved blue lupine)).